The following is a 210-amino-acid chain: Large ribosomal subunit protein uL4 (210 aa).

Positions 44–79 are disordered; the sequence is QHQGTHKVKTRSEVSGGGRKPYRQKGTGNARRGSSR.

It belongs to the universal ribosomal protein uL4 family. In terms of assembly, part of the 50S ribosomal subunit.

Its function is as follows. One of the primary rRNA binding proteins, this protein initially binds near the 5'-end of the 23S rRNA. It is important during the early stages of 50S assembly. It makes multiple contacts with different domains of the 23S rRNA in the assembled 50S subunit and ribosome. Functionally, forms part of the polypeptide exit tunnel. This is Large ribosomal subunit protein uL4 from Chloroherpeton thalassium (strain ATCC 35110 / GB-78).